The sequence spans 116 residues: Large ribosomal subunit protein uL18 (116 aa).

This sequence belongs to the universal ribosomal protein uL18 family. As to quaternary structure, part of the 50S ribosomal subunit; part of the 5S rRNA/L5/L18/L25 subcomplex. Contacts the 5S and 23S rRNAs.

In terms of biological role, this is one of the proteins that bind and probably mediate the attachment of the 5S RNA into the large ribosomal subunit, where it forms part of the central protuberance. The sequence is that of Large ribosomal subunit protein uL18 from Chromohalobacter salexigens (strain ATCC BAA-138 / DSM 3043 / CIP 106854 / NCIMB 13768 / 1H11).